The sequence spans 236 residues: MIVDGRVSKIVLASIKNNIYKVFITVNSPIKFIAGQFVMVTINGKKCPFSIANCPTKNHEIELHIGSSNKDCSLDIIEYFVDALVEEVAIELDAPHGNAWLRSESNNPLLLIAGGTGLSYINSILTNCLNRNIPQDIYLYWGVKNSSLLYEDEELLELSLNNKNLHYIPVIEDKSEEWIGKKGTVLDAVMEDFTDLAHFDIYVCGPFMMAKTAKEKLIEEKKAKSEQMFADAFAYV.

The region spanning 1–102 (MIVDGRVSKI…DAPHGNAWLR (102 aa)) is the FAD-binding FR-type domain. Pyridine is bound at residue 114–118 (GGTGL).

It belongs to the Fre/LuxG FAD/NAD(P) flavoprotein oxidoreductase family.

Probable flavin reductase in the luminescent systems of different marine bacteria. The chain is Probable flavin reductase (luxG) from Aliivibrio fischeri (Vibrio fischeri).